A 426-amino-acid polypeptide reads, in one-letter code: Glutamyl-tRNA reductase (426 aa).

Residues 49-52 (TCNR), Ser-109, 114-116 (EGQ), and Gln-120 contribute to the substrate site. Catalysis depends on Cys-50, which acts as the Nucleophile. 189 to 194 (GAGETG) contributes to the NADP(+) binding site.

It belongs to the glutamyl-tRNA reductase family. In terms of assembly, homodimer.

It catalyses the reaction (S)-4-amino-5-oxopentanoate + tRNA(Glu) + NADP(+) = L-glutamyl-tRNA(Glu) + NADPH + H(+). It functions in the pathway porphyrin-containing compound metabolism; protoporphyrin-IX biosynthesis; 5-aminolevulinate from L-glutamyl-tRNA(Glu): step 1/2. Catalyzes the NADPH-dependent reduction of glutamyl-tRNA(Glu) to glutamate 1-semialdehyde (GSA). In Chlorobaculum parvum (strain DSM 263 / NCIMB 8327) (Chlorobium vibrioforme subsp. thiosulfatophilum), this protein is Glutamyl-tRNA reductase (hemA).